The following is a 326-amino-acid chain: Small ribosomal subunit biogenesis GTPase RsgA (326 aa).

Positions 80–241 constitute a CP-type G domain; sequence LSHQMHIIAS…IIDTPGIKGF (162 aa). GTP-binding positions include 129-132 and 183-191; these read NKID and GHSGVGKST. Residues Cys-265, Cys-270, His-272, and Cys-278 each contribute to the Zn(2+) site.

The protein belongs to the TRAFAC class YlqF/YawG GTPase family. RsgA subfamily. In terms of assembly, monomer. Associates with 30S ribosomal subunit, binds 16S rRNA. It depends on Zn(2+) as a cofactor.

It localises to the cytoplasm. Functionally, one of several proteins that assist in the late maturation steps of the functional core of the 30S ribosomal subunit. Helps release RbfA from mature subunits. May play a role in the assembly of ribosomal proteins into the subunit. Circularly permuted GTPase that catalyzes slow GTP hydrolysis, GTPase activity is stimulated by the 30S ribosomal subunit. This is Small ribosomal subunit biogenesis GTPase RsgA from Flavobacterium psychrophilum (strain ATCC 49511 / DSM 21280 / CIP 103535 / JIP02/86).